Here is a 179-residue protein sequence, read N- to C-terminus: Photosystem I assembly protein Ycf3 (179 aa).

TPR repeat units lie at residues 29 to 62 (AFSY…EEDP), 66 to 99 (SYTL…NSNL), and 126 to 159 (NLEI…APDN).

It belongs to the Ycf3 family.

The protein localises to the plastid. The protein resides in the chloroplast thylakoid membrane. Its function is as follows. Essential for the assembly of the photosystem I (PSI) complex. May act as a chaperone-like factor to guide the assembly of the PSI subunits. The protein is Photosystem I assembly protein Ycf3 of Trieres chinensis (Marine centric diatom).